Reading from the N-terminus, the 651-residue chain is Methionine--tRNA ligase (651 aa).

The 'HIGH' region signature appears at 10–20 (AYTNGPLHLGH). Residues Cys-142, Cys-145, Cys-154, and Cys-157 each coordinate Zn(2+). The short motif at 320–324 (KMSTS) is the 'KMSKS' region element. ATP is bound at residue Thr-323. The 102-residue stretch at 550-651 (YLEKIDLRVG…KDIKAGSKVR (102 aa)) folds into the tRNA-binding domain.

This sequence belongs to the class-I aminoacyl-tRNA synthetase family. MetG type 1 subfamily. In terms of assembly, homodimer. Zn(2+) serves as cofactor.

It localises to the cytoplasm. It carries out the reaction tRNA(Met) + L-methionine + ATP = L-methionyl-tRNA(Met) + AMP + diphosphate. Its function is as follows. Is required not only for elongation of protein synthesis but also for the initiation of all mRNA translation through initiator tRNA(fMet) aminoacylation. The protein is Methionine--tRNA ligase of Methanocaldococcus jannaschii (strain ATCC 43067 / DSM 2661 / JAL-1 / JCM 10045 / NBRC 100440) (Methanococcus jannaschii).